The sequence spans 187 residues: dCTP deaminase (187 aa).

DCTP-binding positions include 110–115 (KSTYAR), 134–136 (TLE), Gln-155, Tyr-169, and Gln-179. Glu-136 acts as the Proton donor/acceptor in catalysis.

It belongs to the dCTP deaminase family. As to quaternary structure, homotrimer.

It carries out the reaction dCTP + H2O + H(+) = dUTP + NH4(+). Its pathway is pyrimidine metabolism; dUMP biosynthesis; dUMP from dCTP (dUTP route): step 1/2. Its function is as follows. Catalyzes the deamination of dCTP to dUTP. The chain is dCTP deaminase from Bordetella pertussis (strain Tohama I / ATCC BAA-589 / NCTC 13251).